Reading from the N-terminus, the 122-residue chain is Large ribosomal subunit protein uL14 (122 aa).

This sequence belongs to the universal ribosomal protein uL14 family. Part of the 50S ribosomal subunit. Forms a cluster with proteins L3 and L19. In the 70S ribosome, L14 and L19 interact and together make contacts with the 16S rRNA in bridges B5 and B8.

Its function is as follows. Binds to 23S rRNA. Forms part of two intersubunit bridges in the 70S ribosome. The sequence is that of Large ribosomal subunit protein uL14 from Variovorax paradoxus (strain S110).